We begin with the raw amino-acid sequence, 404 residues long: Short chain dehydrogenase sirR (404 aa).

A signal peptide spans 1 to 28 (MHSKPQRALVIGATGVSGWSLCLQLLQT). Residues serine 56 and leucine 58 each coordinate NADP(+). N-linked (GlcNAc...) asparagine glycosylation is found at asparagine 67 and asparagine 157. The Proton donor role is filled by serine 237. N-linked (GlcNAc...) asparagine glycosylation is present at asparagine 274. Valine 291 contributes to the NADP(+) binding site.

Belongs to the short-chain dehydrogenases/reductases (SDR) family. Highly divergent.

It participates in mycotoxin biosynthesis. Functionally, short chain dehydrogenase; part of the gene cluster that mediates the biosynthesis of sirodesmin PL, an epipolythiodioxopiperazine (ETP) characterized by a disulfide bridged cyclic dipeptide and that acts as a phytotoxin which is involved in the blackleg didease of canola. SirD catalyzes the O-prenylation of L-tyrosine (L-Tyr) in the presence of dimethylallyl diphosphate (DMAPP) to yield 4-O-dimethylallyl-L-Tyr, and therefore represents probably the first pathway-specific enzyme in the biosynthesis of sirodesmin PL. 4-O-dimethylallyl-L-Tyr, then undergoes condensation with L-Ser in a reaction catalyzed by the non-ribosomal peptide synthase sirP to form the diketopiperazine (DKP) backbone. Further bishydroxylation of the DKP performed by the cytochrome P450 monooxygenase sirC leads to the production of the intermediate phomamide. This step is essential to form the reactive thiol group required for toxicity of sirodesmin PL. The next steps of sirodesmin biosynthesis are not well understood yet, but some predictions could be made from intermediate compounds identification. Phomamide is converted into phomalizarine via oxidation, probably by sirT. Further oxidation, methylation (by sirM or sirN) and reduction steps convert phomalizarine to deacetyl sirodesmin. Finally, acetyltransferase sirH probably acetylates deacetyl sirodesmin to produce sirodesmin PL. The polypeptide is Short chain dehydrogenase sirR (Leptosphaeria maculans (Blackleg fungus)).